The chain runs to 90 residues: Probable Fe(2+)-trafficking protein (90 aa).

Belongs to the Fe(2+)-trafficking protein family.

Functionally, could be a mediator in iron transactions between iron acquisition and iron-requiring processes, such as synthesis and/or repair of Fe-S clusters in biosynthetic enzymes. In Aeromonas hydrophila subsp. hydrophila (strain ATCC 7966 / DSM 30187 / BCRC 13018 / CCUG 14551 / JCM 1027 / KCTC 2358 / NCIMB 9240 / NCTC 8049), this protein is Probable Fe(2+)-trafficking protein.